A 518-amino-acid polypeptide reads, in one-letter code: Integrator complex subunit 14 (518 aa).

The VWFA domain maps to 2 to 204; the sequence is PTVVVMDVSL…KNVQSMFGKL (203 aa). 3 residues coordinate Mg(2+): Ser-10, Ser-12, and Thr-86. The residue at position 418 (Lys-418) is an N6-acetyllysine.

This sequence belongs to the Integrator subunit 14 family. As to quaternary structure, component of the Integrator complex, composed of core subunits INTS1, INTS2, INTS3, INTS4, INTS5, INTS6, INTS7, INTS8, INTS9/RC74, INTS10, INTS11/CPSF3L, INTS12, INTS13, INTS14 and INTS15. The core complex associates with protein phosphatase 2A subunits PPP2CA and PPP2R1A, to form the Integrator-PP2A (INTAC) complex. INTS14 is part of the tail subcomplex, composed of INTS10, INTS13, INTS14 and INTS15.

It is found in the nucleus. Functionally, component of the integrator complex, a multiprotein complex that terminates RNA polymerase II (Pol II) transcription in the promoter-proximal region of genes. The integrator complex provides a quality checkpoint during transcription elongation by driving premature transcription termination of transcripts that are unfavorably configured for transcriptional elongation: the complex terminates transcription by (1) catalyzing dephosphorylation of the C-terminal domain (CTD) of Pol II subunit POLR2A/RPB1 and SUPT5H/SPT5, (2) degrading the exiting nascent RNA transcript via endonuclease activity and (3) promoting the release of Pol II from bound DNA. The integrator complex is also involved in terminating the synthesis of non-coding Pol II transcripts, such as enhancer RNAs (eRNAs), small nuclear RNAs (snRNAs), telomerase RNAs and long non-coding RNAs (lncRNAs). Within the integrator complex, INTS14 is part of the integrator tail module that acts as a platform for the recruitment of transcription factors at promoters. The polypeptide is Integrator complex subunit 14 (Bos taurus (Bovine)).